The primary structure comprises 755 residues: E3 ubiquitin-protein ligase TRIM56 (755 aa).

The RING-type zinc-finger motif lies at 21–60 (CKICLEQLRAPKTLPCLHTYCQDCLAQLADGGRVRCPECR). B box-type zinc fingers lie at residues 98 to 149 (KPAC…VVDL) and 164 to 205 (RQAA…CLPL). Residues Cys169, His172, Cys192, and His197 each contribute to the Zn(2+) site. Residues 216-314 (LEGLLAGVDN…AAAFARRVLS (99 aa)) are a coiled coil. The interval 371–484 (EEQQPQKDGG…SPALGPNLDG (114 aa)) is disordered. Residues 392-404 (SQSRREDEPKTER) are compositionally biased toward basic and acidic residues. Phosphothreonine is present on residues Thr418 and Thr442. Residues 419-447 (PKEEKAQTTREEGAQTLEEDRAQTPHEDG) show a composition bias toward basic and acidic residues. Basic residues predominate over residues 453-469 (RGGRPNKKKKFKGRLKS). Phosphoserine is present on Ser475.

It belongs to the TRIM/RBCC family. In terms of assembly, homooligomer. Interacts with STING1. Interacts with TICAM1. Post-translationally, (Microbial infection) Preferentially ubiquitinated with 'Lys-48' and 'Lys-11'-linked ubiquitin chains by Salmonella effector SopA leading to proteasomal targeting and degradation. Autoubiquitinated. Widely expressed (at protein level).

The protein localises to the cytoplasm. It carries out the reaction S-ubiquitinyl-[E2 ubiquitin-conjugating enzyme]-L-cysteine + [acceptor protein]-L-lysine = [E2 ubiquitin-conjugating enzyme]-L-cysteine + N(6)-ubiquitinyl-[acceptor protein]-L-lysine.. Its pathway is protein modification; protein ubiquitination. In terms of biological role, E3 ubiquitin-protein ligase that plays a key role in innate antiviral immunity by mediating ubiquitination of CGAS and STING1. In response to pathogen- and host-derived double-stranded DNA (dsDNA), targets STING1 to 'Lys-63'-linked ubiquitination, thereby promoting its homodimerization, a step required for the production of type I interferon IFN-beta. Also mediate monoubiquitination of CGAS, thereby promoting CGAS oligomerization and subsequent activation. Promotes also TNFalpha-induced NF-kappa-B signaling by mediating 'Lys-63'-linked ubiquitination TAK1, leading to enhanced interaction between TAK1 and CHUK/IKKalpha. Independently of its E3 ubiquitin ligase activity, positive regulator of TLR3 signaling. Potentiates extracellular double stranded RNA (dsRNA)-induced expression of IFNB1 and interferon-stimulated genes ISG15, IFIT1/ISG56, CXCL10, OASL and CCL5/RANTES. Promotes establishment of an antiviral state by TLR3 ligand and TLR3-mediated chemokine induction following infection by hepatitis C virus. Acts as a restriction factor of Zika virus through direct interaction with the viral RNA via its C-terminal region. This is E3 ubiquitin-protein ligase TRIM56 from Homo sapiens (Human).